Reading from the N-terminus, the 181-residue chain is Regulator of G-protein signaling 10 (181 aa).

The disordered stretch occupies residues 1–35 (MFTRAVSRLSRKRPPSDIHDGDGSSSSGHQSLKST). Phosphoserine is present on residues Ser-24 and Ser-41. An RGS domain is found at 41-156 (SLENLLEDPE…LKSDLFLKHR (116 aa)). Residue Cys-74 is the site of S-palmitoyl cysteine attachment. The tract at residues 157-181 (RTEEEEEDPPDAQTAAKRASRIYNT) is disordered. Phosphoserine is present on Ser-176.

Interacts with GNAZ, GNAI1 and GNAI3. Associates specifically with the activated, GTP-bound forms of GNAZ and GNAI3.

Its subcellular location is the cytoplasm. It localises to the cytosol. The protein resides in the nucleus. Its function is as follows. Regulates G protein-coupled receptor signaling cascades, including signaling downstream of the muscarinic acetylcholine receptor CHRM2. Inhibits signal transduction by increasing the GTPase activity of G protein alpha subunits, thereby driving them into their inactive GDP-bound form. Modulates the activity of potassium channels that are activated in response to CHRM2 signaling. Activity on GNAZ is inhibited by palmitoylation of the G-protein. The polypeptide is Regulator of G-protein signaling 10 (Rgs10) (Rattus norvegicus (Rat)).